The sequence spans 729 residues: Phosphoribosylformylglycinamidine synthase subunit PurL (729 aa).

H54 is a catalytic residue. ATP-binding residues include Y57 and K96. Residue E98 participates in Mg(2+) binding. Residues S99–H102 and R121 each bind substrate. H100 functions as the Proton acceptor in the catalytic mechanism. D122 contributes to the Mg(2+) binding site. Residue Q245 participates in substrate binding. Residue D273 participates in Mg(2+) binding. Position 317 to 319 (E317 to Q319) interacts with substrate. 2 residues coordinate ATP: D495 and G532. Mg(2+) is bound at residue N533. Residue S535 coordinates substrate.

It belongs to the FGAMS family. As to quaternary structure, monomer. Part of the FGAM synthase complex composed of 1 PurL, 1 PurQ and 2 PurS subunits.

It is found in the cytoplasm. The catalysed reaction is N(2)-formyl-N(1)-(5-phospho-beta-D-ribosyl)glycinamide + L-glutamine + ATP + H2O = 2-formamido-N(1)-(5-O-phospho-beta-D-ribosyl)acetamidine + L-glutamate + ADP + phosphate + H(+). It participates in purine metabolism; IMP biosynthesis via de novo pathway; 5-amino-1-(5-phospho-D-ribosyl)imidazole from N(2)-formyl-N(1)-(5-phospho-D-ribosyl)glycinamide: step 1/2. Its function is as follows. Part of the phosphoribosylformylglycinamidine synthase complex involved in the purines biosynthetic pathway. Catalyzes the ATP-dependent conversion of formylglycinamide ribonucleotide (FGAR) and glutamine to yield formylglycinamidine ribonucleotide (FGAM) and glutamate. The FGAM synthase complex is composed of three subunits. PurQ produces an ammonia molecule by converting glutamine to glutamate. PurL transfers the ammonia molecule to FGAR to form FGAM in an ATP-dependent manner. PurS interacts with PurQ and PurL and is thought to assist in the transfer of the ammonia molecule from PurQ to PurL. In Staphylococcus saprophyticus subsp. saprophyticus (strain ATCC 15305 / DSM 20229 / NCIMB 8711 / NCTC 7292 / S-41), this protein is Phosphoribosylformylglycinamidine synthase subunit PurL.